Here is a 448-residue protein sequence, read N- to C-terminus: Phosphoglucosamine mutase (448 aa).

Ser-100 functions as the Phosphoserine intermediate in the catalytic mechanism. Mg(2+) contacts are provided by Ser-100, Asp-240, Asp-242, and Asp-244. Ser-100 bears the Phosphoserine mark.

The protein belongs to the phosphohexose mutase family. Mg(2+) is required as a cofactor. Post-translationally, activated by phosphorylation.

The enzyme catalyses alpha-D-glucosamine 1-phosphate = D-glucosamine 6-phosphate. In terms of biological role, catalyzes the conversion of glucosamine-6-phosphate to glucosamine-1-phosphate. This chain is Phosphoglucosamine mutase, found in Geobacillus thermodenitrificans (strain NG80-2).